We begin with the raw amino-acid sequence, 265 residues long: tRNA (guanine-N(1)-)-methyltransferase (265 aa).

S-adenosyl-L-methionine contacts are provided by residues G119 and 139–144 (IGDYVL).

Belongs to the RNA methyltransferase TrmD family. In terms of assembly, homodimer.

The protein localises to the cytoplasm. The enzyme catalyses guanosine(37) in tRNA + S-adenosyl-L-methionine = N(1)-methylguanosine(37) in tRNA + S-adenosyl-L-homocysteine + H(+). Its function is as follows. Specifically methylates guanosine-37 in various tRNAs. This is tRNA (guanine-N(1)-)-methyltransferase from Alcanivorax borkumensis (strain ATCC 700651 / DSM 11573 / NCIMB 13689 / SK2).